Here is a 102-residue protein sequence, read N- to C-terminus: Large ribosomal subunit protein bL21 (102 aa).

Residues 77–88 (KPKKHTHTKQGH) are compositionally biased toward basic residues. Residues 77 to 102 (KPKKHTHTKQGHRQPYTKVTINKINA) are disordered. Over residues 93 to 102 (TKVTINKINA) the composition is skewed to polar residues.

This sequence belongs to the bacterial ribosomal protein bL21 family. Part of the 50S ribosomal subunit. Contacts protein L20.

Its function is as follows. This protein binds to 23S rRNA in the presence of protein L20. The sequence is that of Large ribosomal subunit protein bL21 from Limosilactobacillus reuteri (strain DSM 20016) (Lactobacillus reuteri).